The chain runs to 243 residues: Probable transcriptional regulator ycf27 (243 aa).

In terms of domain architecture, Response regulatory spans 7-120 (KILVVDDEAS…ELEARIRSVL (114 aa)). The residue at position 56 (aspartate 56) is a 4-aspartylphosphate. The H-T-H motif DNA-binding region spans 76 to 94 (DVPIIMLTALGEVCDRITG). A DNA-binding region (ompR/PhoB-type) is located at residues 135–236 (SGIISIGFLK…ARGTGYLFQR (102 aa)).

Its subcellular location is the plastid. It is found in the chloroplast. Functionally, probable promoter-specific protein mediating the interaction between DNA and RNA polymerase. The protein is Probable transcriptional regulator ycf27 (ycf27) of Pyropia yezoensis (Susabi-nori).